The primary structure comprises 145 residues: MKKSAYSEQREMIVAEAINPIATELRLLDPADLISLLRFECYGSIADLVSSAAELYYHPGTINFGAGGEYKLEWEGVPEIVLDLELKPKGATVYARLILADRHAAVEINHVSFQNPSENPDENTEFLQRSLTAARFVASRQGEAA.

It to R.meliloti R00649.

This is an uncharacterized protein from Agrobacterium fabrum (strain C58 / ATCC 33970) (Agrobacterium tumefaciens (strain C58)).